Consider the following 999-residue polypeptide: Protein Smaug (999 aa).

Positions 1-37 (MKYATGTDNAMTSGISGQTNNSNSVSNEMQPTTSTPT) are enriched in polar residues. Disordered regions lie at residues 1–45 (MKYA…EATS), 50–69 (TATY…QSQP), and 321–370 (CSSV…GSSS). Low complexity predominate over residues 321–338 (CSSVASSSMCPASGSRSS). Phosphoserine is present on residues serine 564 and serine 575. Residues 583–763 (EFKPNYIKFH…KDLKFKLSKM (181 aa)) form an interaction with cup region. An SAM domain is found at 600–654 (GIGLWLKSLRLHKYIELFKNMTYEEMLLITEDFLQSVGVTKGASHKLALCIDKLK). Residues 773–892 (HVKPAGVGPN…HHHAQQMQQM (120 aa)) form a disordered region. Polar residues-rich tracts occupy residues 801–822 (KNGS…NFSL) and 854–864 (HQPQYKSSSYP). Phosphoserine is present on serine 972.

It belongs to the SMAUG family. As to quaternary structure, interacts with oskar (osk). Binds to the 3'-UTR of nos. Interacts with cup, which in turn recruits eIF4-E, leading to an indirect interaction between smg and eIF4-E that prevents mRNA translation.

It is found in the cytoplasm. Translation regulator that binds to the 3'-UTR of specific mRNAs such as nanos (nos) and prevent their translation. Prevents translation of unlocalized nos in the bulk cytoplasm via the recruitment of cup. The sequence is that of Protein Smaug (smg) from Drosophila yakuba (Fruit fly).